Reading from the N-terminus, the 445-residue chain is Adenylosuccinate synthetase (445 aa).

Residues 24-30 (GDEGKGK) and 52-54 (GHT) each bind GTP. D25 functions as the Proton acceptor in the catalytic mechanism. Positions 25 and 52 each coordinate Mg(2+). Residues 25–28 (DEGK), 50–53 (NAGH), T147, R161, N238, T253, and R317 contribute to the IMP site. The active-site Proton donor is H53. Residue 313–319 (TTTGRRR) participates in substrate binding. GTP contacts are provided by residues R319, 345 to 347 (KLD), and 427 to 429 (GVG).

Belongs to the adenylosuccinate synthetase family. As to quaternary structure, homodimer. Mg(2+) serves as cofactor.

It is found in the cytoplasm. It catalyses the reaction IMP + L-aspartate + GTP = N(6)-(1,2-dicarboxyethyl)-AMP + GDP + phosphate + 2 H(+). Its pathway is purine metabolism; AMP biosynthesis via de novo pathway; AMP from IMP: step 1/2. Its function is as follows. Plays an important role in the de novo pathway and in the salvage pathway of purine nucleotide biosynthesis. Catalyzes the first committed step in the biosynthesis of AMP from IMP. This Malassezia globosa (strain ATCC MYA-4612 / CBS 7966) (Dandruff-associated fungus) protein is Adenylosuccinate synthetase.